The sequence spans 177 residues: Adenine phosphoribosyltransferase (177 aa).

It belongs to the purine/pyrimidine phosphoribosyltransferase family. As to quaternary structure, homodimer.

The protein localises to the cytoplasm. It carries out the reaction AMP + diphosphate = 5-phospho-alpha-D-ribose 1-diphosphate + adenine. Its pathway is purine metabolism; AMP biosynthesis via salvage pathway; AMP from adenine: step 1/1. Its function is as follows. Catalyzes a salvage reaction resulting in the formation of AMP, that is energically less costly than de novo synthesis. This chain is Adenine phosphoribosyltransferase, found in Idiomarina loihiensis (strain ATCC BAA-735 / DSM 15497 / L2-TR).